We begin with the raw amino-acid sequence, 36 residues long: Kappa-theraphotoxin-Pg1a (36 aa).

3 disulfide bridges follow: cysteine 4/cysteine 19, cysteine 11/cysteine 24, and cysteine 18/cysteine 31.

It belongs to the neurotoxin 10 (Hwtx-1) family. 44 (Jztx-4) subfamily. In terms of tissue distribution, expressed by the venom gland.

The protein resides in the secreted. Gating modifier of Kv2.1/KCNB1 (IC(50)=5.1 nM), Kv2.2/KCNB2 and Kv4.3/KCND3 channels (IC(50)=39 nM). Acts by shifting the channel activation to more depolarized potentials by stabilizing the resting conformation of the voltage sensor. It completely inhibits opening of the Kv2.1/KCNB1 channel at negative membrane voltages and dramatically shifts channel activation to positive voltages. May act by partitioning into lipid membranes and then by binding the voltage sensor paddle of the channel from a place within the membrane. This is Kappa-theraphotoxin-Pg1a from Chilobrachys guangxiensis (Chinese earth tiger tarantula).